A 940-amino-acid chain; its full sequence is Chordin (940 aa).

Positions 1 to 19 (MMEGLLWILLSVIIASVHG) are cleaved as a signal peptide. One can recognise a VWFC 1 domain in the interval 42–118 (SGCSFGGRFY…LPGHCCKTCP (77 aa)). 4 consecutive CHRD domains span residues 162-277 (TTTD…KHRA), 279-398 (FAET…GRRS), 404-519 (SVLS…LLPY), and 525-652 (RRNE…VPNH). N-linked (GlcNAc...) asparagine glycosylation is found at N347 and N430. VWFC domains follow at residues 689-748 (HSCF…PICE), 767-836 (EGCY…KECP), and 855-919 (RLCK…PECI).

The protein belongs to the chordin family. Interacts with twsg1 and/or bmp4. Post-translationally, cleaved by tolloid proteases; cleavage participates in dorsoventral patterning during early development.

The protein localises to the secreted. Dorsalizing factor. Key developmental protein that dorsalizes early vertebrate embryonic tissues by binding to ventralizing TGF-beta family bone morphogenetic proteins (BMPs) and sequestering them in latent complexes. The chain is Chordin (chd) from Danio rerio (Zebrafish).